The following is a 263-amino-acid chain: Dihydromethanophenazine:CoB--CoM heterodisulfide reductase subunit E (263 aa).

5 helical membrane passes run 18–38 (TFVQ…YGLI), 108–128 (VMHL…GMMF), 150–170 (FLSI…LVAL), 184–204 (IMYD…GFIA), and 221–241 (VAPP…IAFI).

This sequence belongs to the HdrE family. In terms of assembly, the dihydromethanophenazine:CoB--CoM heterodisulfide reductase is composed of two subunits; HdrD and HdrE. Heme b is required as a cofactor.

The protein resides in the cell membrane. The enzyme catalyses methanophenazine + coenzyme B + coenzyme M = dihydromethanophenazine + coenzyme M-coenzyme B heterodisulfide. It functions in the pathway cofactor metabolism; coenzyme M-coenzyme B heterodisulfide reduction; coenzyme B and coenzyme M from coenzyme M-coenzyme B heterodisulfide: step 1/1. In terms of biological role, part of a complex that catalyzes the reversible reduction of CoM-S-S-CoB to the thiol-coenzymes H-S-CoM (coenzyme M) and H-S-CoB (coenzyme B). HdrE may be responsible for anchoring the complex to the membrane. The polypeptide is Dihydromethanophenazine:CoB--CoM heterodisulfide reductase subunit E (hdrE) (Methanosarcina barkeri (strain Fusaro / DSM 804)).